An 86-amino-acid chain; its full sequence is Small ribosomal subunit protein bS18 (86 aa).

The tract at residues 1-20 (MSREEGNNGRRPGGKMRRSR) is disordered.

Belongs to the bacterial ribosomal protein bS18 family. Part of the 30S ribosomal subunit. Forms a tight heterodimer with protein bS6.

In terms of biological role, binds as a heterodimer with protein bS6 to the central domain of the 16S rRNA, where it helps stabilize the platform of the 30S subunit. This Clostridium beijerinckii (strain ATCC 51743 / NCIMB 8052) (Clostridium acetobutylicum) protein is Small ribosomal subunit protein bS18.